The primary structure comprises 806 residues: MPAPAVDSSRFRHRKISVKQRLRIYKSHEIKDLEQEDVSAISSQHQQRELMEIETGVEKNEEKEEHLYKILQSNQLRENKKDLFIPTPDASKTWDEFDRFYQGEFKCPTSYIQFSAQLEDCCGTLYNMDEEDEIFLADLNKSLADSVEPLTEDEFELIMANFESSIKDRQPFLSMDPESILSFADLKPTMLKNDVGDSGVKKELAKEIGMPEDEPFLTMFDNKRPLGKREKNMETLIELFGEKIHDHWKQRKISRHGCDIFPQLKSERNNDKDDNDPYVCFRRRELRQPRKTRRIDVQNSQKLRLLCQQLEYTKDLALTVAKRERAVLEVLENEKFVFQARAQLKTMKRKLGIDADNEDLYSAKKQKLVSSVRTIKQQQQLLLQKQLQIQQQQQQQLQQQQAAITSDSSVKRAKSSKSSKLHKEDSGLYADEKGSEPKKKGPKTGSNKNKEQSLSSAQEIGAQSPVANVSNVQQQQKQASSQVYVKLPNSKIPDIVLEDVGKLLHSKEKSTRKFVEDRMRKRKQEDGDIFFNLTDDPYNPVFNLSIPDNVSPQDAPFSSVAGSKFEVKTSYYSPNLQNYITGTANDIKVFNKEGEAVENNEYKKLEFFNPFDNEIHTHSREFPIAFRRRRGRFNMEYIDQRKTDHNINDMLLQFIDLDGIQKQELDNDVINVYDSKLDDLSRSYYHWKYDSNYNIYGSKFSDEPAKLNQISNDTQVVRFGTMLGSKAYEQLRDATIKYRQEQINKRKKLNSLQQQQMLQKGQQPINNAPHSQSSSPPSHQDTRKNPGSTPNQSSPPKKHVTPNAAA.

2 disordered regions span residues 403 to 461 (AITS…QEIG) and 751 to 806 (SLQQ…NAAA). Positions 411-420 (KRAKSSKSSK) are enriched in basic residues. Residues 421–439 (LHKEDSGLYADEKGSEPKK) show a composition bias toward basic and acidic residues. Residues 751-779 (SLQQQQMLQKGQQPINNAPHSQSSSPPSH) show a composition bias toward low complexity. Residues 785–795 (NPGSTPNQSSP) show a composition bias toward polar residues.

The protein belongs to the enhancer of polycomb family. Component of the NuA4 histone acetyltransferase complex.

The protein resides in the nucleus. Its function is as follows. Component of the NuA4 histone acetyltransferase complex which is involved in transcriptional activation of selected genes principally by acetylation of nucleosomal histone H4 and H2A. The NuA4 complex is also involved in DNA repair. Involved in gene silencing by neighboring heterochromatin, blockage of the silencing spreading along the chromosome, and required for cell cycle progression through G2/M. The sequence is that of Enhancer of polycomb-like protein 1 (EPL1) from Kluyveromyces lactis (strain ATCC 8585 / CBS 2359 / DSM 70799 / NBRC 1267 / NRRL Y-1140 / WM37) (Yeast).